The primary structure comprises 481 residues: Aspartyl/glutamyl-tRNA(Asn/Gln) amidotransferase subunit B (481 aa).

Belongs to the GatB/GatE family. GatB subfamily. As to quaternary structure, heterotrimer of A, B and C subunits.

It carries out the reaction L-glutamyl-tRNA(Gln) + L-glutamine + ATP + H2O = L-glutaminyl-tRNA(Gln) + L-glutamate + ADP + phosphate + H(+). The enzyme catalyses L-aspartyl-tRNA(Asn) + L-glutamine + ATP + H2O = L-asparaginyl-tRNA(Asn) + L-glutamate + ADP + phosphate + 2 H(+). Its function is as follows. Allows the formation of correctly charged Asn-tRNA(Asn) or Gln-tRNA(Gln) through the transamidation of misacylated Asp-tRNA(Asn) or Glu-tRNA(Gln) in organisms which lack either or both of asparaginyl-tRNA or glutaminyl-tRNA synthetases. The reaction takes place in the presence of glutamine and ATP through an activated phospho-Asp-tRNA(Asn) or phospho-Glu-tRNA(Gln). In Pseudomonas fluorescens (strain Pf0-1), this protein is Aspartyl/glutamyl-tRNA(Asn/Gln) amidotransferase subunit B.